The primary structure comprises 128 residues: Lutropin subunit beta (128 aa).

The first 20 residues, 1 to 20 (MERLQGLLLWLLLSPSVVWA), serve as a signal peptide directing secretion. 5 disulfides stabilise this stretch: Cys29–Cys77, Cys43–Cys92, Cys54–Cys108, Cys58–Cys110, and Cys113–Cys120. Asn33 carries N-linked (GlcNAc...) asparagine glycosylation.

Belongs to the glycoprotein hormones subunit beta family. In terms of assembly, heterodimer of a common alpha chain and a unique beta chain which confers biological specificity to thyrotropin, lutropin, follitropin and gonadotropin.

Its subcellular location is the secreted. In terms of biological role, promotes spermatogenesis and ovulation by stimulating the testes and ovaries to synthesize steroids. This Phodopus sungorus (Striped hairy-footed hamster) protein is Lutropin subunit beta (LHB).